Here is an 809-residue protein sequence, read N- to C-terminus: Chloride channel protein F (809 aa).

The Cytoplasmic segment spans residues Met-1–Asn-65. Helical transmembrane passes span Phe-66 to Val-86, Leu-110 to Ile-130, Phe-152 to Leu-172, Ala-218 to Phe-238, Phe-246 to Ile-266, Leu-295 to Leu-315, Ile-333 to Leu-353, Gly-395 to Ile-415, Ile-425 to Leu-445, Val-459 to Ile-479, and Leu-486 to Leu-506. The CBS 1 domain occupies Met-539–Leu-597. 2 disordered regions span residues Pro-604 to Asn-646 and Asn-692 to Ser-729. Residues Asn-620–Asn-646 are compositionally biased toward low complexity. The CBS 2 domain occupies Ile-756–His-809.

This sequence belongs to the chloride channel (TC 2.A.49) family.

The protein localises to the membrane. In terms of biological role, voltage-gated chloride channel. Chloride channels may have several functions including the regulation of cell volume, membrane potential stabilization and signal transduction. This chain is Chloride channel protein F (clcF), found in Dictyostelium discoideum (Social amoeba).